The sequence spans 463 residues: Glycine--tRNA ligase (463 aa).

The substrate site is built by Arg98 and Glu174. ATP is bound by residues 206 to 208 (RNE), 216 to 221 (FRTREF), 290 to 291 (EL), and 334 to 337 (GADR). 221-225 (FEQME) serves as a coordination point for substrate. Residue 330-334 (EPSLG) coordinates substrate.

Belongs to the class-II aminoacyl-tRNA synthetase family. As to quaternary structure, homodimer.

It localises to the cytoplasm. It catalyses the reaction tRNA(Gly) + glycine + ATP = glycyl-tRNA(Gly) + AMP + diphosphate. Functionally, catalyzes the attachment of glycine to tRNA(Gly). The sequence is that of Glycine--tRNA ligase from Staphylococcus saprophyticus subsp. saprophyticus (strain ATCC 15305 / DSM 20229 / NCIMB 8711 / NCTC 7292 / S-41).